We begin with the raw amino-acid sequence, 452 residues long: Phosphoglucosamine mutase (452 aa).

Ser-108 functions as the Phosphoserine intermediate in the catalytic mechanism. Residues Ser-108, Asp-247, Asp-249, and Asp-251 each contribute to the Mg(2+) site. Ser-108 is modified (phosphoserine).

Belongs to the phosphohexose mutase family. Mg(2+) serves as cofactor. In terms of processing, activated by phosphorylation.

The enzyme catalyses alpha-D-glucosamine 1-phosphate = D-glucosamine 6-phosphate. Catalyzes the conversion of glucosamine-6-phosphate to glucosamine-1-phosphate. In Burkholderia mallei (strain NCTC 10247), this protein is Phosphoglucosamine mutase.